The primary structure comprises 29 residues: Conotoxin Bu17 (29 aa).

Disulfide bonds link C4–C19, C5–C25, and C15–C26. C26 bears the Cysteine amide mark.

Belongs to the conotoxin M superfamily. In terms of tissue distribution, expressed by the venom duct.

The protein resides in the secreted. The chain is Conotoxin Bu17 from Conus bullatus (Bubble cone).